The following is a 251-amino-acid chain: Zwei Ig domain protein zig-3 (251 aa).

An N-terminal signal peptide occupies residues 1-19; sequence MLLICISVLAAISAHPLSS. Ig-like C2-type domains are found at residues 42–144 and 160–244; these read PSLK…AKIS and PVIT…TFLY. Cystine bridges form between cysteine 65-cysteine 128 and cysteine 181-cysteine 228.

In terms of tissue distribution, expressed in PVT, AIM and ASI neurons, in vulva and weakly in body wall muscles.

The protein resides in the secreted. Its function is as follows. Required for maintaining axon position of PVQ and PVP neurons postembryonically in the ventral nerve cord (VNC) by preventing axons drifting into the opposite side of the VNC that could occur during body growth and movement. This chain is Zwei Ig domain protein zig-3, found in Caenorhabditis elegans.